We begin with the raw amino-acid sequence, 261 residues long: Kallikrein-1 (261 aa).

A signal peptide spans 1–18; the sequence is MRFLILFLALSLGGIDAA. Positions 19–24 are cleaved as a propeptide — activation peptide; that stretch reads PPVQSR. The 234-residue stretch at 25–258 folds into the Peptidase S1 domain; it reads IVGGFNCEKN…FNTWIRETMA (234 aa). Intrachain disulfides connect cysteine 31-cysteine 173, cysteine 50-cysteine 66, cysteine 152-cysteine 219, cysteine 184-cysteine 198, and cysteine 209-cysteine 234. Histidine 65 functions as the Charge relay system in the catalytic mechanism. N-linked (GlcNAc...) asparagine glycosylation occurs at asparagine 102. The active-site Charge relay system is aspartate 120. Catalysis depends on serine 213, which acts as the Charge relay system.

Belongs to the peptidase S1 family. Kallikrein subfamily.

It catalyses the reaction Preferential cleavage of Arg-|-Xaa bonds in small molecule substrates. Highly selective action to release kallidin (lysyl-bradykinin) from kininogen involves hydrolysis of Met-|-Xaa or Leu-|-Xaa.. Its function is as follows. Glandular kallikreins cleave Met-Lys and Arg-Ser bonds in kininogen to release Lys-bradykinin. The protein is Kallikrein-1 (Klk1) of Mus musculus (Mouse).